A 391-amino-acid chain; its full sequence is Phosphoglycerate kinase (391 aa).

Substrate contacts are provided by residues 21–23 (DLN), R36, 59–62 (HLGR), R113, and R146. Residues K197, E319, and 345–348 (GGDT) contribute to the ATP site.

It belongs to the phosphoglycerate kinase family. As to quaternary structure, monomer.

It is found in the cytoplasm. It carries out the reaction (2R)-3-phosphoglycerate + ATP = (2R)-3-phospho-glyceroyl phosphate + ADP. It functions in the pathway carbohydrate degradation; glycolysis; pyruvate from D-glyceraldehyde 3-phosphate: step 2/5. The protein is Phosphoglycerate kinase of Pseudoalteromonas translucida (strain TAC 125).